The following is an 88-amino-acid chain: UPF0367 protein Tery_1229 (88 aa).

This sequence belongs to the UPF0367 family.

The chain is UPF0367 protein Tery_1229 from Trichodesmium erythraeum (strain IMS101).